Consider the following 228-residue polypeptide: Putative adhesin A1I_01215 (228 aa).

The N-terminal stretch at 1-22 (MKKLLLIAATSATVLSSALSFA) is a signal peptide.

The protein is Putative adhesin A1I_01215 of Rickettsia bellii (strain OSU 85-389).